The following is a 715-amino-acid chain: Fatty acid oxidation complex subunit alpha (715 aa).

An enoyl-CoA hydratase region spans residues 1-190; the sequence is MTTTSAFMLN…KAGLVDDVVP (190 aa). The 3-hydroxyacyl-CoA dehydrogenase stretch occupies residues 306–715; it reads GPLNSVGILG…WTNGETDQGN (410 aa).

This sequence in the N-terminal section; belongs to the enoyl-CoA hydratase/isomerase family. The protein in the central section; belongs to the 3-hydroxyacyl-CoA dehydrogenase family. Heterotetramer of two alpha chains (FadJ) and two beta chains (FadI).

It is found in the cytoplasm. It catalyses the reaction a (3S)-3-hydroxyacyl-CoA = a (2E)-enoyl-CoA + H2O. It carries out the reaction a 4-saturated-(3S)-3-hydroxyacyl-CoA = a (3E)-enoyl-CoA + H2O. The enzyme catalyses a (3S)-3-hydroxyacyl-CoA + NAD(+) = a 3-oxoacyl-CoA + NADH + H(+). The catalysed reaction is (3S)-3-hydroxybutanoyl-CoA = (3R)-3-hydroxybutanoyl-CoA. Its pathway is lipid metabolism; fatty acid beta-oxidation. Functionally, catalyzes the formation of a hydroxyacyl-CoA by addition of water on enoyl-CoA. Also exhibits 3-hydroxyacyl-CoA epimerase and 3-hydroxyacyl-CoA dehydrogenase activities. The chain is Fatty acid oxidation complex subunit alpha from Salmonella newport (strain SL254).